Here is a 103-residue protein sequence, read N- to C-terminus: Carboxysome shell protein CcmK3 (103 aa).

The region spanning 4-91 is the BMC domain; sequence AVGVIQTLGF…PPENVLAVLP (88 aa).

The protein belongs to the bacterial microcompartments protein family. CcmK subfamily. Forms mixed heterohexamers with CcmK4, probably with 1:5 CcmK3:CcmK4 stoichiometry. Only very weak interactions with CcmK1 and CcmK2 were seen. Bulky residues in the pore region probably preclude the formation of homohexamers by this subunit.

Its subcellular location is the carboxysome. Functionally, a probably minor shell protein component of the carboxysome, a polyhedral inclusion where RuBisCO (ribulose bisphosphate carboxylase, rbcL-rbcS) is sequestered. This subunit probably does not form homohexamers. This chain is Carboxysome shell protein CcmK3, found in Synechocystis sp. (strain ATCC 27184 / PCC 6803 / Kazusa).